A 274-amino-acid chain; its full sequence is Phosphatidylglycerol--prolipoprotein diacylglyceryl transferase (274 aa).

4 helical membrane passes run 16-36, 62-82, 94-114, and 129-149; these read VGLH…LSSF, FALG…VLFY, IIKI…LVIW, and LSVT…ALLI. Residue arginine 150 coordinates a 1,2-diacyl-sn-glycero-3-phospho-(1'-sn-glycerol). 3 consecutive transmembrane segments (helical) span residues 184 to 204, 213 to 233, and 247 to 267; these read VQLY…WLCY, GYSA…AEFF, and LTIG…ILWI.

Belongs to the Lgt family.

The protein localises to the cell inner membrane. It catalyses the reaction L-cysteinyl-[prolipoprotein] + a 1,2-diacyl-sn-glycero-3-phospho-(1'-sn-glycerol) = an S-1,2-diacyl-sn-glyceryl-L-cysteinyl-[prolipoprotein] + sn-glycerol 1-phosphate + H(+). It functions in the pathway protein modification; lipoprotein biosynthesis (diacylglyceryl transfer). Catalyzes the transfer of the diacylglyceryl group from phosphatidylglycerol to the sulfhydryl group of the N-terminal cysteine of a prolipoprotein, the first step in the formation of mature lipoproteins. The chain is Phosphatidylglycerol--prolipoprotein diacylglyceryl transferase from Chlamydia muridarum (strain MoPn / Nigg).